Reading from the N-terminus, the 346-residue chain is Methylthioribose-1-phosphate isomerase (346 aa).

Substrate-binding positions include arginine 46–alanine 48, arginine 89, and glutamine 196. The Proton donor role is filled by aspartate 237. Asparagine 247–lysine 248 contributes to the substrate binding site.

Belongs to the eIF-2B alpha/beta/delta subunits family. MtnA subfamily.

The enzyme catalyses 5-(methylsulfanyl)-alpha-D-ribose 1-phosphate = 5-(methylsulfanyl)-D-ribulose 1-phosphate. Its pathway is amino-acid biosynthesis; L-methionine biosynthesis via salvage pathway; L-methionine from S-methyl-5-thio-alpha-D-ribose 1-phosphate: step 1/6. Functionally, catalyzes the interconversion of methylthioribose-1-phosphate (MTR-1-P) into methylthioribulose-1-phosphate (MTRu-1-P). The protein is Methylthioribose-1-phosphate isomerase of Geotalea daltonii (strain DSM 22248 / JCM 15807 / FRC-32) (Geobacter daltonii).